A 321-amino-acid polypeptide reads, in one-letter code: Lipoyl synthase (321 aa).

The [4Fe-4S] cluster site is built by Cys68, Cys73, Cys79, Cys94, Cys98, Cys101, and Ser308. In terms of domain architecture, Radical SAM core spans Phe80–Thr297.

Belongs to the radical SAM superfamily. Lipoyl synthase family. [4Fe-4S] cluster serves as cofactor.

It localises to the cytoplasm. The catalysed reaction is [[Fe-S] cluster scaffold protein carrying a second [4Fe-4S](2+) cluster] + N(6)-octanoyl-L-lysyl-[protein] + 2 oxidized [2Fe-2S]-[ferredoxin] + 2 S-adenosyl-L-methionine + 4 H(+) = [[Fe-S] cluster scaffold protein] + N(6)-[(R)-dihydrolipoyl]-L-lysyl-[protein] + 4 Fe(3+) + 2 hydrogen sulfide + 2 5'-deoxyadenosine + 2 L-methionine + 2 reduced [2Fe-2S]-[ferredoxin]. Its pathway is protein modification; protein lipoylation via endogenous pathway; protein N(6)-(lipoyl)lysine from octanoyl-[acyl-carrier-protein]: step 2/2. Catalyzes the radical-mediated insertion of two sulfur atoms into the C-6 and C-8 positions of the octanoyl moiety bound to the lipoyl domains of lipoate-dependent enzymes, thereby converting the octanoylated domains into lipoylated derivatives. In Vibrio cholerae serotype O1 (strain ATCC 39315 / El Tor Inaba N16961), this protein is Lipoyl synthase.